Here is a 629-residue protein sequence, read N- to C-terminus: Kelch-like protein 13 (629 aa).

Residues 66–135 (CDVTLVPGDG…IYTAKLSLNM (70 aa)) enclose the BTB domain. One can recognise a BACK domain in the interval 170–271 (CVEVGRIANT…TPQDLINYVQ (102 aa)). Kelch repeat units lie at residues 315-363 (HLVT…VIGN), 364-415 (FLYV…ALKG), 416-462 (HLYA…VYGG), 464-509 (MYIS…TVGD), 511-561 (LYVI…VFEN), and 562-610 (KIYV…TLTV).

Component of the BCR(KLHL9-KLHL13) E3 ubiquitin ligase complex, at least composed of CUL3, KLHL9, KLHL13 and RBX1. Interacts with AURKB.

It participates in protein modification; protein ubiquitination. In terms of biological role, substrate-specific adapter of a BCR (BTB-CUL3-RBX1) E3 ubiquitin-protein ligase complex required for mitotic progression and cytokinesis. The BCR(KLHL9-KLHL13) E3 ubiquitin ligase complex mediates the ubiquitination of AURKB and controls the dynamic behavior of AURKB on mitotic chromosomes and thereby coordinates faithful mitotic progression and completion of cytokinesis. The polypeptide is Kelch-like protein 13 (KLHL13) (Gallus gallus (Chicken)).